Reading from the N-terminus, the 235-residue chain is Carbohydrate deacetylase (235 aa).

Residues His-61 and His-124 each coordinate Mg(2+).

This sequence belongs to the YdjC deacetylase family. It depends on Mg(2+) as a cofactor.

In terms of biological role, probably catalyzes the deacetylation of acetylated carbohydrates an important step in the degradation of oligosaccharides. The polypeptide is Carbohydrate deacetylase (Bacillus cereus (strain B4264)).